Consider the following 384-residue polypeptide: Carbamoyl phosphate synthase small chain (384 aa).

A CPSase region spans residues 1 to 192 (MMKRIPAILV…LTDNIRVHRV (192 aa)). L-glutamine is bound by residues Ser-51, Gly-244, and Gly-246. The Glutamine amidotransferase type-1 domain maps to 196 to 382 (KVIVIDFGVK…IEIMTKSKNK (187 aa)). Residue Cys-272 is the Nucleophile of the active site. The L-glutamine site is built by Met-273, Gln-276, Asn-312, Gly-314, and Phe-315. Catalysis depends on residues His-355 and Glu-357.

This sequence belongs to the CarA family. In terms of assembly, composed of two chains; the small (or glutamine) chain promotes the hydrolysis of glutamine to ammonia, which is used by the large (or ammonia) chain to synthesize carbamoyl phosphate. Tetramer of heterodimers (alpha,beta)4.

The protein resides in the plastid. It is found in the chloroplast. It carries out the reaction hydrogencarbonate + L-glutamine + 2 ATP + H2O = carbamoyl phosphate + L-glutamate + 2 ADP + phosphate + 2 H(+). It catalyses the reaction L-glutamine + H2O = L-glutamate + NH4(+). The protein operates within amino-acid biosynthesis; L-arginine biosynthesis; carbamoyl phosphate from bicarbonate: step 1/1. Its pathway is pyrimidine metabolism; UMP biosynthesis via de novo pathway; (S)-dihydroorotate from bicarbonate: step 1/3. Its function is as follows. Small subunit of the glutamine-dependent carbamoyl phosphate synthetase (CPSase). CPSase catalyzes the formation of carbamoyl phosphate from the ammonia moiety of glutamine, carbonate, and phosphate donated by ATP, constituting the first step of 2 biosynthetic pathways, one leading to arginine and/or urea and the other to pyrimidine nucleotides. The small subunit (glutamine amidotransferase) binds and cleaves glutamine to supply the large subunit with the substrate ammonia. This chain is Carbamoyl phosphate synthase small chain, found in Pyropia yezoensis (Susabi-nori).